The primary structure comprises 168 residues: Glycine-rich RNA-binding protein 2 (168 aa).

The 79-residue stretch at 8–86 (YRCFVGGLAW…RNITVNQAQS (79 aa)) folds into the RRM domain. The disordered stretch occupies residues 148 to 168 (GYGGGGGYGGNRGDSGGNWRN).

Possibly has a role in RNA transcription or processing during stress. In Sorghum bicolor (Sorghum), this protein is Glycine-rich RNA-binding protein 2 (GRP2).